Here is a 2196-residue protein sequence, read N- to C-terminus: Non-reducing polyketide synthase CTB1 (2196 aa).

The segment at 11 to 250 (AFGDQTYDCS…TRLPITAPYH (240 aa)) is N-terminal acylcarrier protein transacylase domain (SAT). Residues 381–814 (KSPIAILAAS…GGNTCLVLED (434 aa)) form the Ketosynthase family 3 (KS3) domain. Active-site for beta-ketoacyl synthase activity residues include Cys553, His688, and His733. Residues 922 to 1223 (AFTGQGSAFA…QTFASINKDK (302 aa)) form a malonyl-CoA:ACP transacylase (MAT) domain region. The product template (PT) domain stretch occupies residues 1298–1611 (SSSIHKVITN…VPKRLMHYIV (314 aa)). The segment at 1302–1441 (HKVITNTITA…EKTALKSAAL (140 aa)) is N-terminal hotdog fold. In terms of domain architecture, PKS/mFAS DH spans 1302–1608 (HKVITNTITA…LQGVPKRLMH (307 aa)). His1335 (proton acceptor; for dehydratase activity) is an active-site residue. The segment at 1460–1608 (TYRFSKGMIY…LQGVPKRLMH (149 aa)) is C-terminal hotdog fold. The active-site Proton donor; for dehydratase activity is Asp1520. Positions 1617–1666 (KASGPPTEKKTSSPPVEKKASAPVAPTRPAIQRKNASIPPPATQVTPQNK) are disordered. Over residues 1623–1636 (TEKKTSSPPVEKKA) the composition is skewed to basic and acidic residues. Carrier domains lie at 1671–1748 (PSVS…TRLS) and 1775–1857 (DPSP…SGST). O-(pantetheine 4'-phosphoryl)serine is present on residues Ser1708 and Ser1816. Over residues 1856 to 1867 (STESFDSTTTKP) the composition is skewed to polar residues. The segment at 1856–1923 (STESFDSTTT…PPKGRIPPAW (68 aa)) is disordered. A compositionally biased stretch (low complexity) spans 1872 to 1887 (ATPPLTDSSASSPPSS). The tract at residues 1937-2187 (ILFLFPDGAG…SGAQMLVEHM (251 aa)) is thioesterase (TE) domain.

The cofactor is pantetheine 4'-phosphate.

It carries out the reaction 6 malonyl-CoA + acetyl-CoA + 6 H(+) = nor-toralactone + 6 CO2 + 7 CoA + 2 H2O. It functions in the pathway mycotoxin biosynthesis. In terms of biological role, polyketide synthase; part of the gene cluster that mediates the biosynthesis of cercosporin, a light-activated, non-host-selective toxin. The perylenequinone chromophore of cercosporin absorbs light energy to attain an electronically-activated triplet state and produces active oxygen species such as the hydroxyl radical, superoxide, hydrogen peroxide or singlet oxygen upon reaction with oxygen molecules. These reactive oxygen species cause damage to various cellular components including lipids, proteins and nucleic acids. The first step of cercosporin biosynthesis is performed by the polyketide synthase CTB1 which catalyzes the formation of nor-toralactone. The starter unit acyltransferase (SAT) domain of CTB1 initiates polyketide extension by the selective utilization of acetyl-CoA, which is elongated to the heptaketide in the beta-ketoacyl synthase (KS) domain by successive condensations with six malonyl units introduced by the malonyl acyltransferase (MAT) domain. The product template (PT) domain catalyzes C4-C9 and C2-C11 aldol cyclizations and dehydrations to a trihydroxynaphthalene, which is thought to be delivered to the thioesterase (TE) domain for product release. The bifunctional enzyme CTB3 then methylates nor-toralactone to toralactone before conducting an unusual oxidative aromatic ring opening. The O-methyltransferase CTB2 further methylates the nascent OH-6 of the CBT3 product, blocking further oxidation at this site before the reductase CTB6 reduces the 2-oxopropyl ketone at position C7, giving naphthalene. The FAD-dependent monooxygenase CTB5 in concert with the multicopper oxidase CTB12 are responsible for homodimerization of naphthalene with CTB7 installing the dioxepine moiety, finally producing cercosporin. The fasciclin domain-containing protein CTB11 might act with CTB5 and CTB12 whereas the roles of CTB9 and CTB10 have still to be elucidated. The protein is Non-reducing polyketide synthase CTB1 of Cercospora nicotianae (Barn spot disease fungus).